The sequence spans 190 residues: dITP/XTP pyrophosphatase (190 aa).

7-12 lines the substrate pocket; sequence SNNKNK. D68 functions as the Proton acceptor in the catalytic mechanism. D68 lines the Mg(2+) pocket. Residues T69, 148-151, K171, and 176-177 each bind substrate; these read FGYD and HR.

The protein belongs to the HAM1 NTPase family. As to quaternary structure, homodimer. Requires Mg(2+) as cofactor.

It catalyses the reaction XTP + H2O = XMP + diphosphate + H(+). The enzyme catalyses dITP + H2O = dIMP + diphosphate + H(+). The catalysed reaction is ITP + H2O = IMP + diphosphate + H(+). In terms of biological role, pyrophosphatase that catalyzes the hydrolysis of nucleoside triphosphates to their monophosphate derivatives, with a high preference for the non-canonical purine nucleotides XTP (xanthosine triphosphate), dITP (deoxyinosine triphosphate) and ITP. Seems to function as a house-cleaning enzyme that removes non-canonical purine nucleotides from the nucleotide pool, thus preventing their incorporation into DNA/RNA and avoiding chromosomal lesions. This Flavobacterium psychrophilum (strain ATCC 49511 / DSM 21280 / CIP 103535 / JIP02/86) protein is dITP/XTP pyrophosphatase.